The sequence spans 137 residues: Ribosome-binding factor A (137 aa).

Residues 114–137 form a disordered region; the sequence is QLIDEARAEDRELRPEDDETGNNE. Residues 117–127 are compositionally biased toward basic and acidic residues; sequence DEARAEDRELR. Over residues 128-137 the composition is skewed to acidic residues; it reads PEDDETGNNE.

This sequence belongs to the RbfA family. As to quaternary structure, monomer. Binds 30S ribosomal subunits, but not 50S ribosomal subunits or 70S ribosomes.

The protein localises to the cytoplasm. One of several proteins that assist in the late maturation steps of the functional core of the 30S ribosomal subunit. Associates with free 30S ribosomal subunits (but not with 30S subunits that are part of 70S ribosomes or polysomes). Required for efficient processing of 16S rRNA. May interact with the 5'-terminal helix region of 16S rRNA. The polypeptide is Ribosome-binding factor A (Alcanivorax borkumensis (strain ATCC 700651 / DSM 11573 / NCIMB 13689 / SK2)).